A 225-amino-acid polypeptide reads, in one-letter code: NAD(P)H-quinone oxidoreductase subunit K, chloroplastic (225 aa).

[4Fe-4S] cluster is bound by residues C43, C44, C108, and C139.

Belongs to the complex I 20 kDa subunit family. NDH is composed of at least 16 different subunits, 5 of which are encoded in the nucleus. The cofactor is [4Fe-4S] cluster.

The protein resides in the plastid. The protein localises to the chloroplast thylakoid membrane. It carries out the reaction a plastoquinone + NADH + (n+1) H(+)(in) = a plastoquinol + NAD(+) + n H(+)(out). The catalysed reaction is a plastoquinone + NADPH + (n+1) H(+)(in) = a plastoquinol + NADP(+) + n H(+)(out). In terms of biological role, NDH shuttles electrons from NAD(P)H:plastoquinone, via FMN and iron-sulfur (Fe-S) centers, to quinones in the photosynthetic chain and possibly in a chloroplast respiratory chain. The immediate electron acceptor for the enzyme in this species is believed to be plastoquinone. Couples the redox reaction to proton translocation, and thus conserves the redox energy in a proton gradient. The sequence is that of NAD(P)H-quinone oxidoreductase subunit K, chloroplastic from Capsella bursa-pastoris (Shepherd's purse).